A 302-amino-acid polypeptide reads, in one-letter code: Actin maturation protease (302 aa).

A disordered region spans residues 1–26 (MPHTNEDPTAQQAGVILDPPPPLPPP). The interval 85–205 (SLIQEGPQCG…WAVISGVLFG (121 aa)) is peptidase C39-like. Cysteine 93 is an active-site residue.

It belongs to the ACTMAP family.

The protein localises to the cytoplasm. It carries out the reaction N-terminal N(alpha)-acetyl-L-methionyl-L-aspartyl-[protein] + H2O = N-terminal L-aspartyl-[protein] + N-acetyl-L-methionine. The catalysed reaction is N-terminal N(alpha)-acetyl-L-methionyl-L-glutamyl-[protein] + H2O = N-terminal L-glutamyl-[protein] + N-acetyl-L-methionine. The enzyme catalyses N-terminal N(alpha)-acetyl-L-cysteinyl-L-aspartyl-[protein] + H2O = N-terminal L-aspartyl-[protein] + N-acetyl-L-cysteine. It catalyses the reaction N-terminal N(alpha)-acetyl-L-cysteinyl-L-glutamyl-[protein] + H2O = N-terminal L-glutamyl-[protein] + N-acetyl-L-cysteine. Functionally, actin maturation protease that specifically mediates the cleavage of immature acetylated N-terminal actin, thereby contributing to actin maturation. Cleaves N-terminal acetylated methionine of immature cytoplasmic beta- and gamma-actin after translation. Cleaves N-terminal acetylated cysteine of muscle alpha-actin after canonical removal of N-terminal methionine. The protein is Actin maturation protease of Xenopus tropicalis (Western clawed frog).